The sequence spans 180 residues: Mitochondrial membrane protein FMP33 (180 aa).

Transmembrane regions (helical) follow at residues 34–54 (LYTS…LYLE), 121–141 (FSIV…STLG), and 145–165 (ILYK…YMAL).

The protein resides in the mitochondrion membrane. The polypeptide is Mitochondrial membrane protein FMP33 (FMP33) (Saccharomyces cerevisiae (strain ATCC 204508 / S288c) (Baker's yeast)).